A 192-amino-acid chain; its full sequence is uncharacterized protein (192 aa).

The Nudix hydrolase domain occupies 29-160 (RRQAAVLIPL…PLDIQRRGHD (132 aa)). Positions 67-89 (GAVDSTDASLIAAALREAHEEVA) match the Nudix box motif. 2 residues coordinate Mg(2+): glutamate 83 and glutamate 87.

The protein belongs to the Nudix hydrolase family. PCD1 subfamily. It depends on Mn(2+) as a cofactor. Mg(2+) is required as a cofactor.

Its function is as follows. Probably mediates the hydrolysis of some nucleoside diphosphate derivatives. This is an uncharacterized protein from Enterobacter sp. (strain 638).